The sequence spans 104 residues: MAALQQKIRIRLKAFDHRLLDTSCDRIVDTAKRTGASPVGPIPLPTRRRIYCVLRSPHVDKDSREHFETRTHCRILDIYQPSPKTIDALIKLDLPAGVDIEVKL.

It belongs to the universal ribosomal protein uS10 family. Part of the 30S ribosomal subunit.

In terms of biological role, involved in the binding of tRNA to the ribosomes. This Thermosynechococcus vestitus (strain NIES-2133 / IAM M-273 / BP-1) protein is Small ribosomal subunit protein uS10.